A 249-amino-acid polypeptide reads, in one-letter code: Protein YIP5 (249 aa).

Transmembrane regions (helical) follow at residues 87–107, 131–151, 164–184, 188–208, and 228–248; these read LYGPFWITTTVIQALFFSNSI, ASIIYGYTTIIAVLLWGILVW, LYGYANIVWLPVSLATPPFGL, LASHIVKYVLTGIGLLISIVF, and LLFGIIVFHCLLALSLQLIFF.

Belongs to the YIP1 family. In terms of assembly, interacts with the YIP1 family members yip1 and yip4, and several Rab GTPases. The C-terminal cysteines in the Rab GTPase ypt2 are essential for the interaction. Interacts with snx3.

The protein localises to the membrane. Functionally, possible role in vesicle-mediated transport. May be involved in proper membrane localization of Rab GTPases. This chain is Protein YIP5, found in Schizosaccharomyces pombe (strain 972 / ATCC 24843) (Fission yeast).